The primary structure comprises 202 residues: Small ribosomal subunit protein uS4c (202 aa).

Residues 90–153 enclose the S4 RNA-binding domain; the sequence is MRLDNVIFRL…KSETIISKNI (64 aa).

This sequence belongs to the universal ribosomal protein uS4 family. In terms of assembly, part of the 30S ribosomal subunit. Contacts protein S5. The interaction surface between S4 and S5 is involved in control of translational fidelity.

The protein localises to the plastid. Its subcellular location is the chloroplast. In terms of biological role, one of the primary rRNA binding proteins, it binds directly to 16S rRNA where it nucleates assembly of the body of the 30S subunit. With S5 and S12 plays an important role in translational accuracy. This is Small ribosomal subunit protein uS4c (rps4) from Hylocomium splendens (Glittering wood-moss).